The sequence spans 440 residues: ATP-dependent protease ATPase subunit HslU (440 aa).

ATP-binding positions include isoleucine 18 and 60–65; that span reads GVGKTE. Residues 138 to 159 are disordered; it reads RAQSFDQEDPSAGTRQKLRKKL. Residues aspartate 252, glutamate 318, and arginine 390 each coordinate ATP.

Belongs to the ClpX chaperone family. HslU subfamily. As to quaternary structure, a double ring-shaped homohexamer of HslV is capped on each side by a ring-shaped HslU homohexamer. The assembly of the HslU/HslV complex is dependent on binding of ATP.

Its subcellular location is the cytoplasm. ATPase subunit of a proteasome-like degradation complex; this subunit has chaperone activity. The binding of ATP and its subsequent hydrolysis by HslU are essential for unfolding of protein substrates subsequently hydrolyzed by HslV. HslU recognizes the N-terminal part of its protein substrates and unfolds these before they are guided to HslV for hydrolysis. This chain is ATP-dependent protease ATPase subunit HslU, found in Alkalilimnicola ehrlichii (strain ATCC BAA-1101 / DSM 17681 / MLHE-1).